A 212-amino-acid polypeptide reads, in one-letter code: Spore germination lipase LipC (212 aa).

Ser-11 acts as the Nucleophile in catalysis. Residues Gly-50 and Asn-82 each contribute to the substrate site. Active-site residues include Asp-186 and His-189.

It belongs to the 'GDSL' lipolytic enzyme family.

It localises to the spore coat. In terms of biological role, lipase involved in spore germination. This is Spore germination lipase LipC (lipC) from Bacillus licheniformis (strain ATCC 14580 / DSM 13 / JCM 2505 / CCUG 7422 / NBRC 12200 / NCIMB 9375 / NCTC 10341 / NRRL NRS-1264 / Gibson 46).